A 395-amino-acid polypeptide reads, in one-letter code: tRNA-specific 2-thiouridylase MnmA (395 aa).

Residues 7-14 and methionine 33 each bind ATP; that span reads GLSGGVDS. An interaction with target base in tRNA region spans residues 95–97; it reads NPD. Cysteine 100 acts as the Nucleophile in catalysis. Residues cysteine 100 and cysteine 200 are joined by a disulfide bond. Glycine 124 provides a ligand contact to ATP. Residues 150–152 form an interaction with tRNA region; it reads KDQ. Cysteine 200 serves as the catalytic Cysteine persulfide intermediate. The segment at 346–347 is interaction with tRNA; it reads RY.

It belongs to the MnmA/TRMU family.

It is found in the cytoplasm. The enzyme catalyses S-sulfanyl-L-cysteinyl-[protein] + uridine(34) in tRNA + AH2 + ATP = 2-thiouridine(34) in tRNA + L-cysteinyl-[protein] + A + AMP + diphosphate + H(+). In terms of biological role, catalyzes the 2-thiolation of uridine at the wobble position (U34) of tRNA, leading to the formation of s(2)U34. This is tRNA-specific 2-thiouridylase MnmA from Flavobacterium johnsoniae (strain ATCC 17061 / DSM 2064 / JCM 8514 / BCRC 14874 / CCUG 350202 / NBRC 14942 / NCIMB 11054 / UW101) (Cytophaga johnsonae).